A 411-amino-acid chain; its full sequence is 2,3-bisphosphoglycerate-independent phosphoglycerate mutase (411 aa).

The protein belongs to the BPG-independent phosphoglycerate mutase family. A-PGAM subfamily.

It catalyses the reaction (2R)-2-phosphoglycerate = (2R)-3-phosphoglycerate. It participates in carbohydrate degradation; glycolysis; pyruvate from D-glyceraldehyde 3-phosphate: step 3/5. Catalyzes the interconversion of 2-phosphoglycerate and 3-phosphoglycerate. The protein is 2,3-bisphosphoglycerate-independent phosphoglycerate mutase of Thermococcus kodakarensis (strain ATCC BAA-918 / JCM 12380 / KOD1) (Pyrococcus kodakaraensis (strain KOD1)).